Reading from the N-terminus, the 248-residue chain is Large ribosomal subunit protein uL4 (248 aa).

The interval 45-105 (PYGADPYAGM…KDQSKSVNTK (61 aa)) is disordered. Basic and acidic residues predominate over residues 92–105 (PKAEKDQSKSVNTK).

The protein belongs to the universal ribosomal protein uL4 family. Part of the 50S ribosomal subunit.

Functionally, one of the primary rRNA binding proteins, this protein initially binds near the 5'-end of the 23S rRNA. It is important during the early stages of 50S assembly. It makes multiple contacts with different domains of the 23S rRNA in the assembled 50S subunit and ribosome. In terms of biological role, forms part of the polypeptide exit tunnel. The protein is Large ribosomal subunit protein uL4 of Haloquadratum walsbyi (strain DSM 16790 / HBSQ001).